Consider the following 408-residue polypeptide: tRNA-specific 2-thiouridylase MnmA (408 aa).

Residues 20 to 27 (AMSGGVDS) and leucine 46 contribute to the ATP site. Cysteine 114 acts as the Nucleophile in catalysis. A disulfide bond links cysteine 114 and cysteine 210. Residue glycine 138 coordinates ATP. Positions 160-162 (RDQ) are interaction with tRNA. The active-site Cysteine persulfide intermediate is the cysteine 210.

This sequence belongs to the MnmA/TRMU family.

Its subcellular location is the cytoplasm. The catalysed reaction is S-sulfanyl-L-cysteinyl-[protein] + uridine(34) in tRNA + AH2 + ATP = 2-thiouridine(34) in tRNA + L-cysteinyl-[protein] + A + AMP + diphosphate + H(+). Its function is as follows. Catalyzes the 2-thiolation of uridine at the wobble position (U34) of tRNA, leading to the formation of s(2)U34. This is tRNA-specific 2-thiouridylase MnmA from Bartonella quintana (strain Toulouse) (Rochalimaea quintana).